The sequence spans 396 residues: Zinc metalloproteinase nas-19 (396 aa).

The N-terminal stretch at 1–20 (MVRLIHLIGAIILLFSYAYC) is a signal peptide. Residues 38-231 (RVKRQFERLG…YKINQYYGCW (194 aa)) enclose the Peptidase M12A domain. An N-linked (GlcNAc...) asparagine glycan is attached at asparagine 79. 4 disulfides stabilise this stretch: cysteine 82–cysteine 230, cysteine 105–cysteine 130, cysteine 232–cysteine 252, and cysteine 254–cysteine 263. Residue histidine 138 coordinates Zn(2+). Glutamate 139 is an active-site residue. Zn(2+)-binding residues include histidine 142 and histidine 148. Residues 225 to 264 (NQYYGCWCSKQLECKNGGYTSPSDCSRCNCPKGFFGNLCD) form the EGF-like domain. Residue asparagine 310 is glycosylated (N-linked (GlcNAc...) asparagine).

Zn(2+) is required as a cofactor.

It is found in the secreted. In terms of biological role, metalloprotease. This Caenorhabditis elegans protein is Zinc metalloproteinase nas-19 (nas-19).